A 258-amino-acid chain; its full sequence is MLAKRIIPCLDVRQGQVVKGVQFRNHEIIGGIVPLVCRYAEEGADELVFYDITASADARVVDKRWIADVAEVIDIPFCVAGGIQSVAQAGEILSYGADKISINSPALADPTLISRLADRFGVQCIVVGIDTWFDAASGRYQVNQYTGDETRTHITPWQTLDWIEEVQRRGAGELVLNMMNQDGVRNGYDLMQLRQVRERCHVPLIASGGAGTMAHFLSAFRDAQVDGALAASVFHKQIINIGELKQFLAAEGVEIRLC.

Residues D11 and D130 contribute to the active site.

The protein belongs to the HisA/HisF family. In terms of assembly, heterodimer of HisH and HisF.

Its subcellular location is the cytoplasm. The enzyme catalyses 5-[(5-phospho-1-deoxy-D-ribulos-1-ylimino)methylamino]-1-(5-phospho-beta-D-ribosyl)imidazole-4-carboxamide + L-glutamine = D-erythro-1-(imidazol-4-yl)glycerol 3-phosphate + 5-amino-1-(5-phospho-beta-D-ribosyl)imidazole-4-carboxamide + L-glutamate + H(+). It participates in amino-acid biosynthesis; L-histidine biosynthesis; L-histidine from 5-phospho-alpha-D-ribose 1-diphosphate: step 5/9. Its function is as follows. IGPS catalyzes the conversion of PRFAR and glutamine to IGP, AICAR and glutamate. The HisF subunit catalyzes the cyclization activity that produces IGP and AICAR from PRFAR using the ammonia provided by the HisH subunit. The chain is Imidazole glycerol phosphate synthase subunit HisF from Sodalis glossinidius (strain morsitans).